The chain runs to 124 residues: Small ribosomal subunit protein uS12 (124 aa).

A disordered region spans residues 1–28 (MPTIQQLIRSERSKAKKKTKSPALKQCP). The residue at position 89 (D89) is a 3-methylthioaspartic acid. A disordered region spans residues 101-124 (TLDAQGVKDRKQGRSKYGTKKPKE). Residues 113–124 (GRSKYGTKKPKE) show a composition bias toward basic residues.

This sequence belongs to the universal ribosomal protein uS12 family. As to quaternary structure, part of the 30S ribosomal subunit. Contacts proteins S8 and S17. May interact with IF1 in the 30S initiation complex.

In terms of biological role, with S4 and S5 plays an important role in translational accuracy. Interacts with and stabilizes bases of the 16S rRNA that are involved in tRNA selection in the A site and with the mRNA backbone. Located at the interface of the 30S and 50S subunits, it traverses the body of the 30S subunit contacting proteins on the other side and probably holding the rRNA structure together. The combined cluster of proteins S8, S12 and S17 appears to hold together the shoulder and platform of the 30S subunit. This chain is Small ribosomal subunit protein uS12, found in Crocosphaera subtropica (strain ATCC 51142 / BH68) (Cyanothece sp. (strain ATCC 51142)).